The sequence spans 344 residues: UDP-3-O-acylglucosamine N-acyltransferase (344 aa).

The Proton acceptor role is filled by His-236.

Belongs to the transferase hexapeptide repeat family. LpxD subfamily. As to quaternary structure, homotrimer.

It carries out the reaction a UDP-3-O-[(3R)-3-hydroxyacyl]-alpha-D-glucosamine + a (3R)-hydroxyacyl-[ACP] = a UDP-2-N,3-O-bis[(3R)-3-hydroxyacyl]-alpha-D-glucosamine + holo-[ACP] + H(+). It functions in the pathway bacterial outer membrane biogenesis; LPS lipid A biosynthesis. In terms of biological role, catalyzes the N-acylation of UDP-3-O-acylglucosamine using 3-hydroxyacyl-ACP as the acyl donor. Is involved in the biosynthesis of lipid A, a phosphorylated glycolipid that anchors the lipopolysaccharide to the outer membrane of the cell. The polypeptide is UDP-3-O-acylglucosamine N-acyltransferase (Nitratidesulfovibrio vulgaris (strain ATCC 29579 / DSM 644 / CCUG 34227 / NCIMB 8303 / VKM B-1760 / Hildenborough) (Desulfovibrio vulgaris)).